A 223-amino-acid chain; its full sequence is Adenylate kinase 4, mitochondrial (223 aa).

A ribonucleoside 5'-triphosphate is bound at residue 15–20; that stretch reads GSGKGT. The interval 35–64 is NMP; that stretch reads SSGHFLRENIKANTEVGEMAKQYIEKSLLV. Positions 36 and 41 each coordinate AMP. Residue K60 is modified to N6-succinyllysine. AMP is bound by residues 62–64, 89–92, and Q96; these read LLV and GFPR. The LID stretch occupies residues 125 to 162; sequence RRWIHPPSGRVYNLDFNPPHVHGIDDVTGEPLVQQEDD. A ribonucleoside 5'-triphosphate contacts are provided by residues R126 and 135–136; that span reads VY. R170 contributes to the AMP binding site. Position 175 is an N6-acetyllysine (K175). K179 and K186 each carry N6-acetyllysine; alternate. K179 and K186 each carry N6-succinyllysine; alternate. Residue T199 coordinates a ribonucleoside 5'-triphosphate.

Belongs to the adenylate kinase family. AK3 subfamily. Monomer. Interacts with SLC25A5/ANT2.

Its subcellular location is the mitochondrion matrix. The catalysed reaction is a ribonucleoside 5'-phosphate + ATP = a ribonucleoside 5'-diphosphate + ADP. It carries out the reaction AMP + ATP = 2 ADP. It catalyses the reaction GTP + AMP = GDP + ADP. The enzyme catalyses CMP + ATP = CDP + ADP. The catalysed reaction is GTP + CMP = CDP + GDP. It carries out the reaction dAMP + ATP = dADP + ADP. It catalyses the reaction dCMP + ATP = dCDP + ADP. The enzyme catalyses a 2'-deoxyribonucleoside 5'-diphosphate + ATP = a 2'-deoxyribonucleoside 5'-triphosphate + ADP. The catalysed reaction is a ribonucleoside 5'-diphosphate + ATP = a ribonucleoside 5'-triphosphate + ADP. It carries out the reaction GDP + ATP = GTP + ADP. It catalyses the reaction CDP + GTP = CTP + GDP. The enzyme catalyses CDP + ATP = CTP + ADP. The catalysed reaction is UDP + ATP = UTP + ADP. It carries out the reaction GTP + UDP = UTP + GDP. It catalyses the reaction dADP + GTP = dATP + GDP. The enzyme catalyses dCDP + GTP = dCTP + GDP. The catalysed reaction is dCDP + ATP = dCTP + ADP. It carries out the reaction dGDP + ATP = dGTP + ADP. It catalyses the reaction dTDP + GTP = dTTP + GDP. The enzyme catalyses dTDP + ATP = dTTP + ADP. Its function is as follows. Broad-specificity mitochondrial nucleoside phosphate kinase involved in cellular nucleotide homeostasis by catalyzing nucleoside-phosphate interconversions. Similar to other adenylate kinases, preferentially catalyzes the phosphorylation of the nucleoside monophosphate AMP with ATP as phosphate donor to produce ADP. Phosphorylates only AMP when using GTP as phosphate donor. In vitro, can also catalyze the phosphorylation of CMP, dAMP and dCMP and use GTP as an alternate phosphate donor. Moreover, exhibits a diphosphate kinase activity, producing ATP, CTP, GTP, UTP, TTP, dATP, dCTP and dGTP from the corresponding diphosphate substrates with either ATP or GTP as phosphate donors. Plays a role in controlling cellular ATP levels by regulating phosphorylation and activation of the energy sensor protein kinase AMPK. Plays a protective role in the cellular response to oxidative stress. The polypeptide is Adenylate kinase 4, mitochondrial (Pongo abelii (Sumatran orangutan)).